The primary structure comprises 272 residues: MNKAVIYTLPKGTYSEKATKKFLDYIDGDYKIDYCNSIYDVFERVDNNGLGVVPIENSIEGSVSLTQDLLLQFKDIKILGELALDIHHNLIGYDKNKIKTVISHPQALAQCRNYIKKHGWDVKAVESTAKAVKIVAESKDETLGAIGSKESAEHYNLKILDENIEDYKNNKTRFILIGKKVKFKYHPKNYKVSIVFELKEDKPGALYHILKEFAERNINLTRIESRPSKKRLGTYIFYIDFENNKEKLEEILKSLERHTTFINLLGKYPVFD.

The region spanning 4 to 179 (AVIYTLPKGT…NKTRFILIGK (176 aa)) is the Prephenate dehydratase domain. One can recognise an ACT domain in the interval 194–269 (IVFELKEDKP…TFINLLGKYP (76 aa)).

Homodimer.

It catalyses the reaction prephenate + H(+) = 3-phenylpyruvate + CO2 + H2O. Its pathway is amino-acid biosynthesis; L-phenylalanine biosynthesis; phenylpyruvate from prephenate: step 1/1. Its activity is regulated as follows. Inhibited by L-phenylalanine but not by L-tyrosine or L-tryptophan. This chain is Prephenate dehydratase (pheA), found in Methanocaldococcus jannaschii (strain ATCC 43067 / DSM 2661 / JAL-1 / JCM 10045 / NBRC 100440) (Methanococcus jannaschii).